The following is a 154-amino-acid chain: Urease accessory protein UreE (154 aa).

It belongs to the UreE family.

Its subcellular location is the cytoplasm. Involved in urease metallocenter assembly. Binds nickel. Probably functions as a nickel donor during metallocenter assembly. The polypeptide is Urease accessory protein UreE (Rhizobium meliloti (strain 1021) (Ensifer meliloti)).